The sequence spans 143 residues: Transcriptional regulator MraZ (143 aa).

2 SpoVT-AbrB domains span residues 5-47 (THSP…PIRE) and 76-119 (ASNE…DAQT).

This sequence belongs to the MraZ family. In terms of assembly, forms oligomers.

The protein localises to the cytoplasm. The protein resides in the nucleoid. This Thermobifida fusca (strain YX) protein is Transcriptional regulator MraZ.